Consider the following 120-residue polypeptide: Dense granule protein 5 (120 aa).

The signal sequence occupies residues M1 to A25. Residues S27–S59 form a disordered region. Residues A76 to L93 traverse the membrane as a helical segment. The segment covering A100–A109 has biased composition (basic and acidic residues). The interval A100–E120 is disordered. A compositionally biased stretch (acidic residues) spans T110 to E120.

The protein localises to the secreted. Its subcellular location is the parasitophorous vacuole lumen. It is found in the parasitophorous vacuole membrane. The protein resides in the cytoplasmic vesicle. It localises to the secretory vesicle. In terms of biological role, plays a role in the function of the cyst and parasitophorous vacuole membranes and therefore in host-parasite interactions. The sequence is that of Dense granule protein 5 (GRA5) from Toxoplasma gondii.